Here is a 336-residue protein sequence, read N- to C-terminus: MGNCLHQAELSPSTENSSQLNLEDLWNFSYNGNDSFPEIDYDASLAAAAPCHSCSLLNDSSLPFFILASDLGILASSTVLFMLFRPLFRWQLCPGWPVLAQLAVGSALFSIVVPILAPGLGNTHSSALCSLGYCVWYGSAFAQALLLGCHASLGPKLGAGQVPGLTLGLPVGLWGATALLTLPITLASGASDGLCTPIYSTELEALQATHAVACFAIFVLLPLGLFGAKGLKKALGMGPGPWMNILWVWFIFWWPHGLVLGLDFLVGSKLSLLPTCLAQQVLDLLLNLAEALAIVHCVATPLLLALFCHQTTRTLLPSLPLPERWSSPVDTLGSKS.

Over 1–63 (MGNCLHQAEL…CSLLNDSSLP (63 aa)) the chain is Extracellular. Residues Asn-16, Asn-27, Asn-33, and Asn-58 are each glycosylated (N-linked (GlcNAc...) asparagine). 2 cysteine pairs are disulfide-bonded: Cys-51/Cys-276 and Cys-129/Cys-195. A helical transmembrane segment spans residues 64-84 (FFILASDLGILASSTVLFMLF). Residues 85–95 (RPLFRWQLCPG) are Cytoplasmic-facing. Residues 96–116 (WPVLAQLAVGSALFSIVVPIL) traverse the membrane as a helical segment. At 117–129 (APGLGNTHSSALC) the chain is on the extracellular side. Residues 130–153 (SLGYCVWYGSAFAQALLLGCHASL) traverse the membrane as a helical segment. At 154 to 166 (GPKLGAGQVPGLT) the chain is on the cytoplasmic side. A helical transmembrane segment spans residues 167–187 (LGLPVGLWGATALLTLPITLA). Residues 188–207 (SGASDGLCTPIYSTELEALQ) are Extracellular-facing. The chain crosses the membrane as a helical span at residues 208–228 (ATHAVACFAIFVLLPLGLFGA). Topologically, residues 229 to 244 (KGLKKALGMGPGPWMN) are cytoplasmic. A helical transmembrane segment spans residues 245–265 (ILWVWFIFWWPHGLVLGLDFL). The Extracellular segment spans residues 266-287 (VGSKLSLLPTCLAQQVLDLLLN). Residues 288–308 (LAEALAIVHCVATPLLLALFC) form a helical membrane-spanning segment. Residues 309-336 (HQTTRTLLPSLPLPERWSSPVDTLGSKS) lie on the Cytoplasmic side of the membrane.

This sequence belongs to the G-protein coupled receptor 1 family. Atypical chemokine receptor subfamily.

The protein resides in the early endosome. It localises to the recycling endosome. The protein localises to the membrane. In terms of biological role, atypical chemokine receptor that controls chemokine levels and localization via high-affinity chemokine binding that is uncoupled from classic ligand-driven signal transduction cascades, resulting instead in chemokine sequestration, degradation, or transcytosis. Also known as interceptor (internalizing receptor) or chemokine-scavenging receptor or chemokine decoy receptor. Has a promiscuous chemokine-binding profile, interacting with inflammatory chemokines of both the CXC and the CC subfamilies but not with homeostatic chemokines. Acts as a receptor for chemokines including CCL2, CCL5, CCL7, CCL11, CCL13, CCL14, CCL17, CXCL5, CXCL6, IL8/CXCL8, CXCL11, GRO, RANTES, MCP-1 and TARC. May regulate chemokine bioavailability and, consequently, leukocyte recruitment through two distinct mechanisms: when expressed in endothelial cells, it sustains the abluminal to luminal transcytosis of tissue-derived chemokines and their subsequent presentation to circulating leukocytes; when expressed in erythrocytes, serves as blood reservoir of cognate chemokines but also as a chemokine sink, buffering potential surges in plasma chemokine levels. The polypeptide is Atypical chemokine receptor 1 (ACKR1) (Saimiri boliviensis boliviensis (Bolivian squirrel monkey)).